A 267-amino-acid chain; its full sequence is tRNA-cytidine(32) 2-sulfurtransferase 1 (267 aa).

A PP-loop motif motif is present at residues 42–47 (SGGKDS). 3 residues coordinate [4Fe-4S] cluster: Cys-117, Cys-120, and Cys-208.

This sequence belongs to the TtcA family. In terms of assembly, homodimer. It depends on Mg(2+) as a cofactor. The cofactor is [4Fe-4S] cluster.

The protein localises to the cytoplasm. The catalysed reaction is cytidine(32) in tRNA + S-sulfanyl-L-cysteinyl-[cysteine desulfurase] + AH2 + ATP = 2-thiocytidine(32) in tRNA + L-cysteinyl-[cysteine desulfurase] + A + AMP + diphosphate + H(+). Its pathway is tRNA modification. Catalyzes the ATP-dependent 2-thiolation of cytidine in position 32 of tRNA, to form 2-thiocytidine (s(2)C32). The sulfur atoms are provided by the cysteine/cysteine desulfurase (IscS) system. This Francisella tularensis subsp. novicida (strain U112) protein is tRNA-cytidine(32) 2-sulfurtransferase 1.